Reading from the N-terminus, the 509-residue chain is Protein disulfide-isomerase (509 aa).

An N-terminal signal peptide occupies residues 1–19 (MLSRALLCLALAWAARVGA). The Thioredoxin 1 domain maps to 20–136 (DALEEEDNVL…IVNWLKKRTG (117 aa)). Residues Cys-55 and Cys-58 each act as nucleophile in the active site. Cys-55 and Cys-58 are disulfide-bonded. N6-acetyllysine is present on Lys-202. Lys-224 and Lys-273 each carry N6-succinyllysine. Phosphoserine occurs at positions 333 and 359. The region spanning 335–477 (ELTAEKITQF…FKKFLESGGQ (143 aa)) is the Thioredoxin 2 domain. Residues Cys-399 and Cys-402 each act as nucleophile in the active site. A disulfide bridge links Cys-399 with Cys-402. Phosphoserine is present on Ser-429. A Prevents secretion from ER motif is present at residues 506–509 (KDEL).

Belongs to the protein disulfide isomerase family. Heterodimer; heterodimerizes with the protein microsomal triglyceride transfer MTTP. Homodimer. Monomers and homotetramers may also occur. Interacts with P4HA2, forming a heterotetramer consisting of 2 alpha subunits (P4HA2) and 2 beta (P4HB), where P4HB plays the role of a structural subunit; this tetramer catalyzes the formation of 4-hydroxyproline in collagen. Also constitutes the structural subunit of the microsomal triacylglycerol transfer protein MTTP in mammalian cells. Stabilizes both enzymes and retain them in the ER without contributing to the catalytic activity. Binds UBQLN1. Interacts with ERO1B. Interacts with ILDR2. Interacts with ERN1/IRE1A (via N-terminus); the interaction is enhanced by phosphorylation of P4HB by FAM20C in response to endoplasmic reticulum stress and results in attenuation of ERN1 activity. Phosphorylation of Ser-359 by FAM20C is induced by endoplasmic reticulum stress and results in a functional switch from oxidoreductase to molecular chaperone. It also promotes interaction with ERN1.

Its subcellular location is the endoplasmic reticulum. It is found in the endoplasmic reticulum lumen. The protein localises to the melanosome. It localises to the cell membrane. It catalyses the reaction Catalyzes the rearrangement of -S-S- bonds in proteins.. Its function is as follows. This multifunctional protein catalyzes the formation, breakage and rearrangement of disulfide bonds. At the cell surface, seems to act as a reductase that cleaves disulfide bonds of proteins attached to the cell. May therefore cause structural modifications of exofacial proteins. Inside the cell, seems to form/rearrange disulfide bonds of nascent proteins. At high concentrations and following phosphorylation by FAM20C, functions as a chaperone that inhibits aggregation of misfolded proteins. At low concentrations, facilitates aggregation (anti-chaperone activity). May be involved with other chaperones in the structural modification of the TG precursor in hormone biogenesis. Also acts as a structural subunit of various enzymes such as prolyl 4-hydroxylase and microsomal triacylglycerol transfer protein MTTP. Receptor for LGALS9; the interaction retains P4HB at the cell surface of Th2 T helper cells, increasing disulfide reductase activity at the plasma membrane, altering the plasma membrane redox state and enhancing cell migration. This chain is Protein disulfide-isomerase (P4hb), found in Rattus norvegicus (Rat).